Here is a 279-residue protein sequence, read N- to C-terminus: Urease accessory protein UreD (279 aa).

Belongs to the UreD family. As to quaternary structure, ureD, UreF and UreG form a complex that acts as a GTP-hydrolysis-dependent molecular chaperone, activating the urease apoprotein by helping to assemble the nickel containing metallocenter of UreC. The UreE protein probably delivers the nickel.

The protein localises to the cytoplasm. Required for maturation of urease via the functional incorporation of the urease nickel metallocenter. The polypeptide is Urease accessory protein UreD (Nitrosospira multiformis (strain ATCC 25196 / NCIMB 11849 / C 71)).